The primary structure comprises 271 residues: Shikimate dehydrogenase (NADP(+)) (271 aa).

Shikimate-binding positions include 14–16 (SRS) and Thr61. Lys65 acts as the Proton acceptor in catalysis. Residues Asn86 and Asp102 each coordinate shikimate. NADP(+) is bound by residues 126–130 (GAGGA), 149–154 (NRTFSR), and Met213. Shikimate is bound at residue Tyr215. Gly238 is a binding site for NADP(+).

It belongs to the shikimate dehydrogenase family. As to quaternary structure, homodimer.

It catalyses the reaction shikimate + NADP(+) = 3-dehydroshikimate + NADPH + H(+). It participates in metabolic intermediate biosynthesis; chorismate biosynthesis; chorismate from D-erythrose 4-phosphate and phosphoenolpyruvate: step 4/7. Functionally, involved in the biosynthesis of the chorismate, which leads to the biosynthesis of aromatic amino acids. Catalyzes the reversible NADPH linked reduction of 3-dehydroshikimate (DHSA) to yield shikimate (SA). The chain is Shikimate dehydrogenase (NADP(+)) from Histophilus somni (strain 129Pt) (Haemophilus somnus).